The chain runs to 179 residues: Large ribosomal subunit protein uL5 (179 aa).

It belongs to the universal ribosomal protein uL5 family. In terms of assembly, part of the 50S ribosomal subunit; part of the 5S rRNA/L5/L18/L25 subcomplex. Contacts the 5S rRNA and the P site tRNA. Forms a bridge to the 30S subunit in the 70S ribosome.

This is one of the proteins that bind and probably mediate the attachment of the 5S RNA into the large ribosomal subunit, where it forms part of the central protuberance. In the 70S ribosome it contacts protein S13 of the 30S subunit (bridge B1b), connecting the 2 subunits; this bridge is implicated in subunit movement. Contacts the P site tRNA; the 5S rRNA and some of its associated proteins might help stabilize positioning of ribosome-bound tRNAs. This is Large ribosomal subunit protein uL5 from Synechococcus sp. (strain CC9605).